The primary structure comprises 483 residues: MORN repeat-containing protein 1 (483 aa).

Ser18 bears the Phosphoserine mark. 7 MORN repeats span residues 39–61 (YEGE…DGSY), 62–84 (YEGE…WSGN), 86–108 (YSGQ…AGGH), 109–131 (YEGE…DGQV), 132–154 (YQGS…NGDK), 155–177 (YEGD…DGST), and 178–200 (YKGQ…SGVT). The disordered stretch occupies residues 392–427 (EKAGNRPKGDRSPPEVLSTAQEPLRGTNRSDGTTAE). Positions 394–404 (AGNRPKGDRSP) are enriched in basic and acidic residues. Ser403 bears the Phosphoserine mark. Over residues 418–427 (TNRSDGTTAE) the composition is skewed to polar residues.

The sequence is that of MORN repeat-containing protein 1 (Morn1) from Rattus norvegicus (Rat).